The following is a 375-amino-acid chain: 23S rRNA (uracil(747)-C(5))-methyltransferase RlmC (375 aa).

[4Fe-4S] cluster-binding residues include cysteine 3, cysteine 11, cysteine 14, and cysteine 87. The S-adenosyl-L-methionine site is built by glutamine 212, phenylalanine 241, glutamate 262, and asparagine 307. Cysteine 334 serves as the catalytic Nucleophile.

Belongs to the class I-like SAM-binding methyltransferase superfamily. RNA M5U methyltransferase family. RlmC subfamily.

The enzyme catalyses uridine(747) in 23S rRNA + S-adenosyl-L-methionine = 5-methyluridine(747) in 23S rRNA + S-adenosyl-L-homocysteine + H(+). Catalyzes the formation of 5-methyl-uridine at position 747 (m5U747) in 23S rRNA. The polypeptide is 23S rRNA (uracil(747)-C(5))-methyltransferase RlmC (Escherichia coli (strain SMS-3-5 / SECEC)).